The primary structure comprises 142 residues: Nucleoside diphosphate kinase (142 aa).

Lysine 11, phenylalanine 59, arginine 87, threonine 93, arginine 104, and asparagine 114 together coordinate ATP. Residue histidine 117 is the Pros-phosphohistidine intermediate of the active site.

The protein belongs to the NDK family. In terms of assembly, homotetramer. Mg(2+) serves as cofactor.

It localises to the cytoplasm. The enzyme catalyses a 2'-deoxyribonucleoside 5'-diphosphate + ATP = a 2'-deoxyribonucleoside 5'-triphosphate + ADP. It catalyses the reaction a ribonucleoside 5'-diphosphate + ATP = a ribonucleoside 5'-triphosphate + ADP. In terms of biological role, major role in the synthesis of nucleoside triphosphates other than ATP. The ATP gamma phosphate is transferred to the NDP beta phosphate via a ping-pong mechanism, using a phosphorylated active-site intermediate. The chain is Nucleoside diphosphate kinase from Aeromonas hydrophila subsp. hydrophila (strain ATCC 7966 / DSM 30187 / BCRC 13018 / CCUG 14551 / JCM 1027 / KCTC 2358 / NCIMB 9240 / NCTC 8049).